Consider the following 1451-residue polypeptide: MWKSRRAQLCLFSVLLAFLPSASSLNGDSKYMVLVPSQLYTETPEKICLHLYHLNETVTVTASLVSQTGRRNLFDELVVDKDLFQCVSFIIPTLNSPDEEEFLYVDIKGPTHEFSKRNAVLVKNKESVVFVQTDKPVYKPGQSVKFRVVSMDKTLRPLNELLPLAYIEDPKKNRIMQWRDIKTENGLKQMSFSLAAEPIQGPYKIVVHKQSGVKEEHSFTVMEFVLPRFNVDLKVPNAISVNDEVLQVTVCGKYTYGKPVPGQVKISICHETEAGCKEVNSKLDNNGCSTQEVNITELQSKKRNYEVQLFHVNATVTEEGTGLEFNGYGTTKIERITNKLIFLKADSHFRHGIPFFVKVRLVDIKGDPIPNERVFIKAQVLGYTSATTTDQHGLAKFSIDTAGFSGSSLHIKVNHKGKDSCYFFYCMEERYASAEHVAYAVYSLSKSYIYLVKETSSILPCNQIHTVQAHFILKGDLGVLKELVFYYLVMAQGSIIQTGNHTHQVEPGEAPVKGNFDLEIPVEFSMAPMAKMLIYTILPDGEVIADSVNFEIEKCLRNKVDLSFSSSQSLPASQTRLQVTASPQSLCGLRAVDQSVLLLKPEDELSPSWIYNLPGMQHNKFIPSSSLSEDREDCILYSSWVAEKHTDWVPHGREKDVYRYVEDMDLKAFTNLKIKLPKICFDSAPMSGPRGKFDLAFSSEVSGTLQKGSSKRPQPEEPPREDPPPKDPLAETIRKYFPETWVWDIVTVNSTGVAEVEMTVPDTITEWKAGALCLSNDTGLGLSSVVPLQAFQPFFVEVSLPYSVVRGEAFMLKATVMNYLPTSMRMSVQLEASPDFTAVPVGDDHDSYCLSANGRHTSSWLVTPKSLGNVNFSVSVEAQQSSEPCGSEVATVPETGRKDTVVKVLIVEPEGIKQEHTFNSLFCASDAEISEKMSLVLPPTVVKDSARAHFSVMGDILSSAIKNTQNLLHMPYGCGEQNMVLFAPNIYVLKYLDKTQQLTQKIKTKALGFLRAGYQRELNYKHKDGSYSAFGDQNGEREGNTWLTAFVLKSFAQARAFIFIDESHITHAFTWLSQQQKDNGCFRSSGSLFHNDIKHPVVSKALSCLESSWKTIEQGRNANFVYTKALMAYAFALAGNQDKRNEILKSLDEEAIKEDNSIHWERPQKPRKSEHNLYKPQASSVEVEMNAYVVLARLTAQPAPSPEDLTLSRSTIMWLTKQQNSNGGFSSTQDTVVALDALSKYGAVTFSRRQKTSLVTIQSTGSFSQKFQVENSNCLLLQQVPLPDIPGDYTISVSGEGCVYAQTTLRYNMHLEKQQSAFALRVQTVPLTCNNPKGHNSFQISLEISYTGSRPASNMVIADVKMLSGFIPLKPTVKKLERLEHISRTEVSNNNVLLYLDQVTNQTLAFSFIIQQDISVRNLQPAIVKVYDYYETDEVAYAEYSSPCSSDKQNV.

Residues 1 to 27 (MWKSRRAQLCLFSVLLAFLPSASSLNG) form the signal peptide. Intrachain disulfides connect cysteine 48/cysteine 86, cysteine 251/cysteine 276, and cysteine 269/cysteine 288. The N-linked (GlcNAc...) asparagine glycan is linked to asparagine 55. N-linked (GlcNAc...) asparagine glycosylation is found at asparagine 294, asparagine 313, and asparagine 500. Disulfide bonds link cysteine 461/cysteine 555, cysteine 587/cysteine 773, and cysteine 634/cysteine 680. A bait region region spans residues 677–734 (PKICFDSAPMSGPRGKFDLAFSSEVSGTLQKGSSKRPQPEEPPREDPPPKDPLAETIR). Positions 703–728 (GTLQKGSSKRPQPEEPPREDPPPKDP) are disordered. Basic and acidic residues predominate over residues 713–728 (PQPEEPPREDPPPKDP). 3 N-linked (GlcNAc...) asparagine glycosylation sites follow: asparagine 749, asparagine 776, and asparagine 871. 4 cysteine pairs are disulfide-bonded: cysteine 849-cysteine 885, cysteine 923-cysteine 1274, cysteine 1081-cysteine 1104, and cysteine 1298-cysteine 1444. Residues 974–977 (CGEQ) constitute a cross-link (isoglutamyl cysteine thioester (Cys-Gln)). N-linked (GlcNAc...) asparagine glycosylation is present at asparagine 1401.

It belongs to the protease inhibitor I39 (alpha-2-macroglobulin) family. Monomer. In terms of tissue distribution, plasma.

It localises to the secreted. A proteinase activates the inhibitor by specific proteolysis in the bait region, which, by an unknown mechanism leads to reaction at the cysteinyl-glutamyl internal thiol ester site and to a conformational change, whereby the proteinase is trapped and/or covalently bound to the inhibitor. While in the tetrameric proteinase inhibitors steric inhibition is sufficiently strong, monomeric forms need a covalent linkage between the activated glutamyl residue of the original thiol ester and a terminal amino group of a lysine or another nucleophilic group on the proteinase, for inhibition to be effective. This is Murinoglobulin-2 (Mug2) from Mus musculus (Mouse).